Consider the following 722-residue polypeptide: Ras and EF-hand domain-containing protein (722 aa).

2 EF-hand domains span residues 5–39 (DELSRLRALFHTFDSKSSGRLEKGQFSALCAELKV) and 39–74 (VSPSEAEDIFARLDSDKDSCITFEDFAMGFRGARGL). Basic and acidic residues predominate over residues 75-84 (HMPEGKKDVE). Residues 75–109 (HMPEGKKDVEQGEPPKSPSTPDKEEKPEETSSPAW) are disordered. A coiled-coil region spans residues 156–335 (REIRLQSTEM…ANRKLHDSND (180 aa)). A compositionally biased stretch (polar residues) spans 355-374 (INTSPGSTISRNSPKLTRCT). Disordered stretches follow at residues 355–384 (INTSPGSTISRNSPKLTRCTSPYDRSPRSS) and 439–491 (FHRS…SGAS). Over residues 480-491 (SNPVSRSSSGAS) the composition is skewed to low complexity. GTP is bound by residues 532-537 (AVGKSS), 635-638 (NKAD), and 672-673 (AK).

Belongs to the small GTPase superfamily. Rab family. In terms of assembly, homodimer.

It localises to the cytoplasm. Its subcellular location is the perinuclear region. In terms of biological role, binds predominantly GDP, and also GTP. The protein is Ras and EF-hand domain-containing protein (rasef) of Xenopus tropicalis (Western clawed frog).